The following is an 87-amino-acid chain: Large ribosomal subunit protein bL27 (87 aa).

Residues 1–22 (MAHKKGQGSVKNGRDSRSKRLG) form a disordered region.

Belongs to the bacterial ribosomal protein bL27 family.

This Akkermansia muciniphila (strain ATCC BAA-835 / DSM 22959 / JCM 33894 / BCRC 81048 / CCUG 64013 / CIP 107961 / Muc) protein is Large ribosomal subunit protein bL27.